The sequence spans 1081 residues: FHIP family protein GA25918 (1081 aa).

Residues 1-11 are compositionally biased toward polar residues; that stretch reads MSWLRSSPLRQ. 5 disordered regions span residues 1-31, 504-524, 650-685, 830-913, and 933-1027; these read MSWLRSSPLRQSGNGGGGGVSTGHSSTGSLR, ARPKSVHEQQAPSGATGEQPI, ADEESDATDLTVTTTTASEADLEHNSSSVSSGMGGG, NENS…AASS, and NNNN…SEPA. A Phosphoserine modification is found at serine 508. The span at 657-668 shows a compositional bias: low complexity; it reads TDLTVTTTTASE. Serine 833 carries the post-translational modification Phosphoserine. Over residues 840–856 the composition is skewed to low complexity; that stretch reads QPQTTLSQQQQQQQGQQ. A compositionally biased stretch (polar residues) spans 857-876; sequence RSAYATLSAATPVQATQTSA. Composition is skewed to low complexity over residues 891 to 913 and 933 to 953; these read SKSISSMFSRRSTPNPPSSAASS and NNNNSGSGGQSQPFSSTGTGT. Residues 954–963 show a composition bias toward polar residues; sequence CETSLSTNPQ. Over residues 964-993 the composition is skewed to low complexity; it reads SGAAAARSTGTATTANGNSSNSNISIGGST. Positions 994-1010 are enriched in polar residues; sequence QTLSGHSNTTTYSSSTL.

This sequence belongs to the FHIP family.

The protein is FHIP family protein GA25918 of Drosophila pseudoobscura pseudoobscura (Fruit fly).